Here is a 565-residue protein sequence, read N- to C-terminus: DNA repair protein RAD7 (565 aa).

2 disordered regions span residues 1–22 (MYRS…PNSA) and 41–68 (WYQR…FTAE). The tract at residues 1–200 (MYRSRNRPKR…SKLVFNKLRD (200 aa)) is hydrophilic. Basic and acidic residues predominate over residues 47-62 (KKQEDATDEKKGKAED). A phosphoserine mark is found at serine 64 and serine 85. The segment at 105 to 137 (ADSDEEEYETSHISDTPVSLSSANDRESLTKKR) is disordered. The span at 115–127 (SHISDTPVSLSSA) shows a compositional bias: polar residues.

This sequence to S.pombe SpCC613.14. As to quaternary structure, component of the global genome repair (GGR) complex composed of at least ABF1, RAD7 and RAD16. Interacts with ELC1.

Its function is as follows. Component of the global genome repair (GGR) complex which promotes global genome nucleotide excision repair (GG-NER) which removes DNA damage from nontranscribing DNA. This protein is one of 10 proteins (RAD1, 2,3,4,7,10,14, 16,23 and MMS19) involved in excision repair of DNA damaged with UV light, bulky adducts, or cross-linking agents. This is DNA repair protein RAD7 (RAD7) from Saccharomyces cerevisiae (strain ATCC 204508 / S288c) (Baker's yeast).